Here is a 99-residue protein sequence, read N- to C-terminus: Osteocalcin (99 aa).

The first 23 residues, 1-23 (MRTLSLLTLLALTAFCLSDLAGA), serve as a signal peptide directing secretion. A propeptide spanning residues 24-49 (KPSDSESDKAFMSKQEGSKVVNRLRR) is cleaved from the precursor. Residues 50–96 (YLNNGLGAPAPYPDPLEPHREVCELNPNCDELADHIGFQDAYKRIYG) enclose the Gla domain. Hydroxyproline is present on P58. 4 residues coordinate Ca(2+): E66, E70, E73, and D79. 4-carboxyglutamate occurs at positions 66, 70, and 73. A disulfide bond links C72 and C78.

This sequence belongs to the osteocalcin/matrix Gla protein family. Post-translationally, gamma-carboxyglutamate residues are formed by vitamin K dependent carboxylation by GGCX. These residues are essential for the binding of calcium. Decarboxylation promotes the hormone activity.

It is found in the secreted. In terms of biological role, the carboxylated form is one of the main organic components of the bone matrix, which constitutes 1-2% of the total bone protein: it acts as a negative regulator of bone formation and is required to limit bone formation without impairing bone resorption or mineralization. The carboxylated form binds strongly to apatite and calcium. Its function is as follows. The uncarboxylated form acts as a hormone secreted by osteoblasts, which regulates different cellular processes, such as energy metabolism, male fertility and brain development. Regulates of energy metabolism by acting as a hormone favoring pancreatic beta-cell proliferation, insulin secretion and sensitivity and energy expenditure. Uncarboxylated osteocalcin hormone also promotes testosterone production in the testes: acts as a ligand for G protein-coupled receptor GPRC6A at the surface of Leydig cells, initiating a signaling response that promotes the expression of enzymes required for testosterone synthesis in a CREB-dependent manner. Also acts as a regulator of brain development: osteocalcin hormone crosses the blood-brain barrier and acts as a ligand for GPR158 on neurons, initiating a signaling response that prevents neuronal apoptosis in the hippocampus, favors the synthesis of all monoamine neurotransmitters and inhibits that of gamma-aminobutyric acid (GABA). Osteocalcin also crosses the placenta during pregnancy and maternal osteocalcin is required for fetal brain development. This is Osteocalcin (Bglap) from Rattus norvegicus (Rat).